Here is a 318-residue protein sequence, read N- to C-terminus: Protoheme IX farnesyltransferase (318 aa).

Helical transmembrane passes span 37-57, 59-79, 108-128, 131-151, 158-178, 183-203, 216-238, 249-269, and 296-316; these read VMEL…RGLP, IWLI…AGAF, EALV…WFGA, LAGL…TLIL, NIVW…AAVT, WPAI…YWPL, VPML…YTWA, LGHA…WFLL, and ISYL…GMPL.

It belongs to the UbiA prenyltransferase family. Protoheme IX farnesyltransferase subfamily.

The protein resides in the cell membrane. The enzyme catalyses heme b + (2E,6E)-farnesyl diphosphate + H2O = Fe(II)-heme o + diphosphate. It participates in porphyrin-containing compound metabolism; heme O biosynthesis; heme O from protoheme: step 1/1. Converts heme B (protoheme IX) to heme O by substitution of the vinyl group on carbon 2 of heme B porphyrin ring with a hydroxyethyl farnesyl side group. The polypeptide is Protoheme IX farnesyltransferase (Renibacterium salmoninarum (strain ATCC 33209 / DSM 20767 / JCM 11484 / NBRC 15589 / NCIMB 2235)).